The following is a 103-amino-acid chain: c-Myc-binding protein (103 aa).

The protein belongs to the AMY1 family. As to quaternary structure, binds via its C-terminal region to the N-terminal region of MYC. Associates with AKAP1/S-AKAP84. Interacts with MYCBPAP. Interacts with CFAP91. In terms of tissue distribution, highly expressed in heart, placenta, pancreas, skeletal muscle and kidney. Also present at low levels in lung.

The protein localises to the cytoplasm. It is found in the nucleus. The protein resides in the mitochondrion. Its function is as follows. May control the transcriptional activity of MYC. Stimulates the activation of E box-dependent transcription by MYC. The protein is c-Myc-binding protein of Homo sapiens (Human).